A 218-amino-acid chain; its full sequence is Ornithine decarboxylase antizyme 2 (218 aa).

It belongs to the ODC antizyme family. In terms of assembly, interacts with ODC1 and thereby sterically blocks ODC homodimerization. As to expression, expressed ubiquitously in 24 hours embryos, with highest levels in telencephalon, lens, retina, cerebellum and hindbrain primordia.

Functionally, ornithine decarboxylase (ODC) antizyme protein that negatively regulates ODC activity and intracellular polyamine biosynthesis and uptake in response to increased intracellular polyamine levels. Binds to ODC monomers, inhibiting the assembly of the functional ODC homodimers. Does not target the ODC monomers for degradation, which allows a protein synthesis-independent restoration of ODC activity. This Danio rerio (Zebrafish) protein is Ornithine decarboxylase antizyme 2 (oaz1b).